The primary structure comprises 138 residues: Transcription antitermination protein NusB (138 aa).

The protein belongs to the NusB family.

In terms of biological role, involved in transcription antitermination. Required for transcription of ribosomal RNA (rRNA) genes. Binds specifically to the boxA antiterminator sequence of the ribosomal RNA (rrn) operons. The sequence is that of Transcription antitermination protein NusB from Limosilactobacillus reuteri (strain DSM 20016) (Lactobacillus reuteri).